A 314-amino-acid chain; its full sequence is Cytochrome f (314 aa).

The signal sequence occupies residues M1–A30. 4 residues coordinate heme: Y31, C51, C54, and H55. The helical transmembrane segment at I280–K300 threads the bilayer.

The protein belongs to the cytochrome f family. In terms of assembly, the 4 large subunits of the cytochrome b6-f complex are cytochrome b6, subunit IV (17 kDa polypeptide, petD), cytochrome f and the Rieske protein, while the 4 small subunits are PetG, PetL, PetM and PetN. The complex functions as a dimer. Heme serves as cofactor.

The protein localises to the plastid. It is found in the chloroplast thylakoid membrane. Functionally, component of the cytochrome b6-f complex, which mediates electron transfer between photosystem II (PSII) and photosystem I (PSI), cyclic electron flow around PSI, and state transitions. The protein is Cytochrome f of Thalassiosira pseudonana (Marine diatom).